Here is a 7603-residue protein sequence, read N- to C-terminus: Cysteine repeat modular protein B (7603 aa).

Asn-172 carries an N-linked (GlcNAc...) asparagine glycan. A helical transmembrane segment spans residues 223 to 243 (LVGFFLVPVFVVFFVLSSDAT). 2 disordered regions span residues 248 to 275 (GVGV…SSPG) and 291 to 323 (RDTK…GKGF). Positions 263–275 (SVSSSSRASSSPG) are enriched in low complexity. The span at 302-313 (SSRRSARARRRR) shows a compositional bias: basic residues. Residues Asn-329, Asn-589, Asn-848, Asn-1128, Asn-1183, and Asn-1402 are each glycosylated (N-linked (GlcNAc...) asparagine). Residues 1554 to 1574 (VLRSRSGPSHPSSVSQPSPSF) are disordered. A compositionally biased stretch (low complexity) spans 1557–1573 (SRSGPSHPSSVSQPSPS). N-linked (GlcNAc...) asparagine glycans are attached at residues Asn-1622, Asn-2578, Asn-2664, Asn-3094, and Asn-3126. A disordered region spans residues 3316–3445 (SNAVPEADEN…SDLTTSQPED (130 aa)). Over residues 3321-3340 (EADENQVESAEPEQNAEGET) the composition is skewed to acidic residues. The span at 3342 to 3360 (EQGAEEAGGNAAEPGAESG) shows a compositional bias: low complexity. N-linked (GlcNAc...) asparagine glycosylation is found at Asn-3546, Asn-4367, Asn-4823, Asn-4901, Asn-5186, Asn-5546, and Asn-5666. Positions 5758–5799 (LAESRSDDGTVGDDVDLDDNALSGTTNSGWTTSSSNSERVRK) are disordered. Residues 5767 to 5776 (TVGDDVDLDD) are compositionally biased toward acidic residues. Residues 5780–5794 (SGTTNSGWTTSSSNS) show a composition bias toward low complexity. N-linked (GlcNAc...) asparagine glycosylation is found at Asn-5806, Asn-5876, Asn-5998, Asn-6055, and Asn-6369. The tract at residues 6043–6115 (GEADHTPADG…EASEAESVSA (73 aa)) is disordered. The span at 6051-6060 (DGSSNSSEDS) shows a compositional bias: polar residues. Residues 6391–6405 (EFTDTGPAPDDHTDE) show a composition bias toward basic and acidic residues. Positions 6391-6436 (EFTDTGPAPDDHTDEGGANLDSTGGSGEPSSSAPVDPSGENEGQLL) are disordered. Polar residues predominate over residues 6410–6423 (LDSTGGSGEPSSSA). Asn-6453 is a glycosylation site (N-linked (GlcNAc...) asparagine). A run of 8 helical transmembrane segments spans residues 6520–6540 (IFIL…ALTI), 6552–6572 (VLIR…LMPA), 6578–6598 (LAGW…ALHP), 6627–6647 (IFVP…CVAT), 6770–6790 (LILG…GFVA), 6831–6851 (CVAL…QEIF), 6888–6908 (GLMV…FEVF), and 6912–6932 (GAIP…SLFV). Asn-7013 is a glycosylation site (N-linked (GlcNAc...) asparagine). A helical membrane pass occupies residues 7017 to 7037 (FVAALSDSLSQLVIAWCQFTI). The N-linked (GlcNAc...) asparagine glycan is linked to Asn-7061. The stretch at 7174–7242 (APQLRKENHA…RGLIESEIDD (69 aa)) forms a coiled coil. Residues 7379–7603 (AAPAAGLRSH…LKKPGSPKQE (225 aa)) form a disordered region. Over residues 7408–7417 (LGTNLSTPSA) the composition is skewed to polar residues. Asn-7411 carries an N-linked (GlcNAc...) asparagine glycan. 3 stretches are compositionally biased toward low complexity: residues 7474-7496 (PTPS…SVTP), 7509-7541 (SEAP…SSDL), and 7560-7582 (GEAA…AAQP).

In terms of assembly, component of a complex, at least composed of cysteine repeat modular protein A (CRMPa), cysteine repeat modular protein B (CRMPb), micronemal protein 15 (MIC15) and thrombospondin type 1 domain-containing protein (TSP1).

It is found in the cell membrane. Its subcellular location is the endoplasmic reticulum. It localises to the golgi apparatus. Functionally, required for triggering rhoptry secretion. Plays a role in host cell invasion. The sequence is that of Cysteine repeat modular protein B from Toxoplasma gondii.